The chain runs to 82 residues: MKHLIFSSALVCALVVCTFAEEQVNVPFLPDERAVKCIGWQETCNGNLPCCNECVMCECNIMGQNCRCNHPKATNECESRRR.

The signal sequence occupies residues 1–20 (MKHLIFSSALVCALVVCTFA). The propeptide occupies 21–33 (EEQVNVPFLPDER). Disulfide bonds link Cys37/Cys51, Cys44/Cys57, Cys50/Cys68, Cys54/Cys77, and Cys59/Cys66. Residue Ser79 is the site of O-palmitoyl serine attachment. Positions 80-82 (RRR) are excised as a propeptide.

This sequence belongs to the neurotoxin 02 (plectoxin) family. 02 (plectoxin) subfamily. In terms of processing, plectoxin-5 presumably undergoes post-translational modification to give rise to plectoxin-6. Expressed by the venom gland.

The protein resides in the secreted. In terms of biological role, potent toxin that may paralyze and/or kill insect pests such as H.virescens (lepidoptera), S.exigua (beet armyworm) and M.sexta (tobacco hornworm). The polypeptide is U1-plectoxin-Pt1a (Plectreurys tristis (Spider)).